A 414-amino-acid polypeptide reads, in one-letter code: MEFEIHLPKEPLLVAVSGGCDSMVLAHLLYEANHDLMIVHVHHGLRKESDEEAEAVRAWAEARRVGIRMTRLEWEGQAPSQAACRTRRYAFFQEVMAETGRRHLVLAHHRDDQLETLLIQLIRGEAGVDGIPRIRSFATGQIHRPLLPYSKQQLYDYAKARQVVWHEDETNAGTKYLRNQMRHRLLPLLAELRPGYEEATVQAAMVRYEQKQEHLKYVTSYVKEQMTDRGLPLEAIQKLPTDFRRLVLRALLPDHDFTSEDYNRFLTLLRVDMPSGEVYYGNWRIQRTYGYVTCVRCPEKNLLPEALEVGIDLGTYHYGEQTITFSRTTTGIPFSAVQFPLTIRSVLPGDRIRLAVGTKKVSRILVDAKVPRASRAEIPVVVDAAGQVLAVIGHRIAIFGSFELLAESCLMIEW.

17–22 (SGGCDS) provides a ligand contact to ATP.

This sequence belongs to the tRNA(Ile)-lysidine synthase family.

Its subcellular location is the cytoplasm. The enzyme catalyses cytidine(34) in tRNA(Ile2) + L-lysine + ATP = lysidine(34) in tRNA(Ile2) + AMP + diphosphate + H(+). Ligates lysine onto the cytidine present at position 34 of the AUA codon-specific tRNA(Ile) that contains the anticodon CAU, in an ATP-dependent manner. Cytidine is converted to lysidine, thus changing the amino acid specificity of the tRNA from methionine to isoleucine. The chain is tRNA(Ile)-lysidine synthase from Exiguobacterium sibiricum (strain DSM 17290 / CCUG 55495 / CIP 109462 / JCM 13490 / 255-15).